We begin with the raw amino-acid sequence, 192 residues long: Protein SHORT HYPOCOTYL IN WHITE LIGHT 1 (192 aa).

The Nuclear localization signal signature appears at 43-50 (FRRLNRSL). A disordered region spans residues 70–92 (GGDNYDVVPDDDGFSDDDDEEDE). A compositionally biased stretch (acidic residues) spans 77–92 (VPDDDGFSDDDDEEDE). Transmembrane regions (helical) follow at residues 122-142 (ILPA…ILLL) and 159-179 (GGTV…ASFF).

Interacts with HY5 and COP1 in the nucleus. In terms of tissue distribution, expressed in young seedlings (e.g. hypocotyl and cotyledons) and in green tissues (e.g. leaves, stems, sepals, and young siliques).

The protein resides in the nucleus membrane. Its function is as follows. Negative regulator of photomorphogenesis modulating both light and abscisic acid (ABA) signaling pathways. Negatively regulates the light-mediated inhibition of hypocotyl elongation, probably in a PHYB-mediated signaling pathway, but promotes flowering time (especially in long days) and lateral root formation. Enhances light-regulated gene expression. Promotes COP1-mediated degradation of HY5 during seedling development (e.g. hypocotyl growth) through enhanced ubiquitination in the darkness. Also involved in root gravitropism. The polypeptide is Protein SHORT HYPOCOTYL IN WHITE LIGHT 1 (Arabidopsis thaliana (Mouse-ear cress)).